The chain runs to 256 residues: DNA repair protein RecO (256 aa).

This sequence belongs to the RecO family.

Involved in DNA repair and RecF pathway recombination. The chain is DNA repair protein RecO from Streptococcus pneumoniae serotype 19F (strain G54).